The following is a 474-amino-acid chain: Phenolic acid decarboxylase (474 aa).

Mn(2+)-binding residues include asparagine 161, histidine 182, and glutamate 224. Residues 161 to 166 and 181 to 182 each bind prenylated FMN; these read NVGTYR and MH. The active-site Proton donor is the glutamate 273.

Belongs to the UbiD family. YclC subfamily. Requires prenylated FMN as cofactor. Mn(2+) is required as a cofactor.

It carries out the reaction vanillate + H(+) = guaiacol + CO2. Involved in the non-oxidative decarboxylation and detoxification of phenolic derivatives under both aerobic and anaerobic conditions. Phenolic acid decarboxylase that catalyzes the reversible decarboxylation of vanillate. This is Phenolic acid decarboxylase from Streptomyces sp. (strain D7).